A 471-amino-acid polypeptide reads, in one-letter code: 5-hydroxytryptamine receptor 2B (471 aa).

The Extracellular portion of the chain corresponds to 1–26 (MFQAAVGPLQTNISLPEETPGLELNW). N-linked (GlcNAc...) asparagine glycosylation is present at Asn12. A helical membrane pass occupies residues 27-49 (AALLIVMVIIPTIGGNILVILAV). Residues 50 to 60 (WLEKKLQNATN) are Cytoplasmic-facing. A helical membrane pass occupies residues 61 to 83 (FFLMSLAVADLLVGLLVMPIALI). The Extracellular portion of the chain corresponds to 84-99 (TILYDSDWPLPEPLCP). Cysteines 98 and 182 form a disulfide. A helical transmembrane segment spans residues 100–121 (IWLFLDVLFSTASIMHLCAISL). The ergotamine site is built by Asp105 and Thr110. The short motif at 122–124 (DRY) is the DRY motif; important for ligand-induced conformation changes element. Residues 122–141 (DRYIAIKKPIQHSQYKSRAK) are Cytoplasmic-facing. A helical membrane pass occupies residues 142 to 162 (VMLKIALVWLISICIAIPIPI). The Extracellular portion of the chain corresponds to 163–191 (KGLRNYPHPNNITFTSNHTCVLKTDTFQE). 2 N-linked (GlcNAc...) asparagine glycosylation sites follow: Asn173 and Asn179. Residue Leu184 participates in ergotamine binding. A [DE]RFG motif; may stabilize a conformation that preferentially activates signaling via beta-arrestin family members motif is present at residues 187–190 (DTFQ). Residues 192–214 (FIIFGSLVAFFIPLTIMMIIYFL) traverse the membrane as a helical segment. At 215–308 (TVRVLRKKVY…TLTNEQRASK (94 aa)) the chain is on the cytoplasmic side. A helical membrane pass occupies residues 309-329 (VLGIVFLLFVVMWCPFFITNI). The Extracellular segment spans residues 330 to 344 (TSALCGPCDANIIGR). A disulfide bridge links Cys334 with Cys337. The chain crosses the membrane as a helical span at residues 345 to 366 (LMEIFSWVGYVSSGINPLVYTL). The short motif at 360 to 364 (NPLVY) is the NPxxY motif; important for ligand-induced conformation changes and signaling element. Topologically, residues 367–471 (FNKTFRQAFT…CKQEERVSCV (105 aa)) are cytoplasmic. Cys381 carries the S-palmitoyl cysteine lipid modification. Residues 469 to 471 (SCV) carry the PDZ-binding motif.

It belongs to the G-protein coupled receptor 1 family. As to expression, detected in brain, heart and gut.

It localises to the cell membrane. It is found in the synapse. Its subcellular location is the synaptosome. Its function is as follows. G-protein coupled receptor for 5-hydroxytryptamine (serotonin). Also functions as a receptor for various ergot alkaloid derivatives and psychoactive substances. Ligand binding causes a conformation change that triggers signaling via guanine nucleotide-binding proteins (G proteins) and modulates the activity of downstream effectors. HTR2B is coupled to G(q)/G(11) G alpha proteins and activates phospholipase C-beta, releasing diacylglycerol (DAG) and inositol 1,4,5-trisphosphate (IP3) second messengers that modulate the activity of phosphatidylinositol 3-kinase and promote the release of Ca(2+) ions from intracellular stores, respectively. Beta-arrestin family members inhibit signaling via G proteins and mediate activation of alternative signaling pathways. Plays a role in the regulation of dopamine and 5-hydroxytryptamine release, 5-hydroxytryptamine uptake and in the regulation of extracellular dopamine and 5-hydroxytryptamine levels, and thereby affects neural activity. The polypeptide is 5-hydroxytryptamine receptor 2B (htr2b) (Dichotomyctere fluviatilis (Green pufferfish)).